Here is a 279-residue protein sequence, read N- to C-terminus: Aldo-keto reductase Mvan_2161 (279 aa).

Tyrosine 54 (proton donor) is an active-site residue. NADPH-binding residues include leucine 194, valine 196, isoleucine 232, arginine 234, serine 235, arginine 240, serine 243, asparagine 244, and arginine 270.

Belongs to the aldo/keto reductase family.

The protein is Aldo-keto reductase Mvan_2161 of Mycolicibacterium vanbaalenii (strain DSM 7251 / JCM 13017 / BCRC 16820 / KCTC 9966 / NRRL B-24157 / PYR-1) (Mycobacterium vanbaalenii).